The following is a 73-amino-acid chain: Protein SlyX homolog (73 aa).

It belongs to the SlyX family.

This chain is Protein SlyX homolog, found in Histophilus somni (strain 2336) (Haemophilus somnus).